Here is a 1827-residue protein sequence, read N- to C-terminus: Phenolphthiocerol/phthiocerol polyketide synthase subunit C (1827 aa).

The Ketosynthase family 3 (KS3) domain occupies 35–461 (CEPVAVVGIG…GTNAHVVVEQ (427 aa)). Catalysis depends on for beta-ketoacyl synthase activity residues C207, H342, and H383. An acyltransferase region spans residues 566-876 (VFVYSGQGSQ…LAAVGVAASE (311 aa)). Residue S654 is the For malonyltransferase activity of the active site. The interval 910–1037 (HPLLGAHIEM…AKVEQSPREC (128 aa)) is N-terminal hotdog fold. The segment at 910–1076 (HPLLGAHIEM…QHHGPAFAAL (167 aa)) is dehydratase. A PKS/mFAS DH domain is found at 910 to 1198 (HPLLGAHIEM…LRRVERRAVP (289 aa)). H942 acts as the Proton acceptor; for dehydratase activity in catalysis. A C-terminal hotdog fold region spans residues 1050–1198 (GTTVSPADFY…LRRVERRAVP (149 aa)). D1111 acts as the Proton donor; for dehydratase activity in catalysis. Residues 1439–1617 (ASYVVTGGLG…VINWGPWSEV (179 aa)) form a beta-ketoacyl reductase region. 1440–1485 (SYVVTGGLGGLGLVVARWLVDRGAGRVVLGGRSDPTDEQCNVLAEL) serves as a coordination point for NADP(+). The Carrier domain maps to 1706–1785 (RAVTERMCAR…DLTADLMRQL (80 aa)). Residue S1745 is modified to O-(pantetheine 4'-phosphoryl)serine. Residues 1807-1820 (RAAARHGAAMRRRP) show a composition bias toward basic residues. The segment at 1807 to 1827 (RAAARHGAAMRRRPKPEVQGG) is disordered.

Requires NADP(+) as cofactor. The cofactor is pantetheine 4'-phosphate.

It carries out the reaction icosanoyl-[(phenol)carboxyphthiodiolenone synthase] + 2 (S)-methylmalonyl-CoA + 3 malonyl-CoA + 5 NADPH + 10 H(+) = C32-carboxyphthiodiolenone-[(phenol)carboxyphthiodiolenone synthase] + 5 CO2 + 5 NADP(+) + 5 CoA + 2 H2O. The enzyme catalyses docosanoyl-[(phenol)carboxyphthiodiolenone synthase] + 2 (S)-methylmalonyl-CoA + 3 malonyl-CoA + 5 NADPH + 10 H(+) = C34-carboxyphthiodiolenone-[(phenol)carboxyphthiodiolenone synthase] + 5 CO2 + 5 NADP(+) + 5 CoA + 2 H2O. It catalyses the reaction 17-(4-hydroxyphenyl)heptadecanoyl-[(phenol)carboxyphthiodiolenone synthase] + 2 (S)-methylmalonyl-CoA + 3 malonyl-CoA + 5 NADPH + 10 H(+) = C35-(phenol)carboxyphthiodiolenone-[(phenol)carboxyphthiodiolenone synthase] + 5 CO2 + 5 NADP(+) + 5 CoA + 2 H2O. The catalysed reaction is 19-(4-hydroxyphenyl)nonadecanoyl-[(phenol)carboxyphthiodiolenone synthase] + 2 (S)-methylmalonyl-CoA + 3 malonyl-CoA + 5 NADPH + 10 H(+) = C37-(phenol)carboxyphthiodiolenone-[(phenol)carboxyphthiodiolenone synthase] + 5 CO2 + 5 NADP(+) + 5 CoA + 2 H2O. The protein operates within lipid metabolism; fatty acid biosynthesis. Part of the PpsABCDE complex involved in the biosynthesis of the lipid core common to phthiocerols and phenolphthiocerols by successive additions of malonyl-CoA or methylmalonyl-CoA extender units. PpsA can accept as substrate the activated forms of either icosanoyl (C20), docosanoyl (C22) or lignoceroyl (C24) groups from FadD26, or a (4-hydroxyphenyl)-C17 or (4-hydroxyphenyl)-C19 fatty acyl from FadD29. PpsA initiates the biosynthesis and extends its substrate using a malonyl-CoA extender unit. The PpsB and PpsC proteins add the second and third malonyl-CoA extender units. PpsD adds an (R)-methylmalonyl unit and PpsE adds a second (R)-methylmalonyl unit. The incorporation of the methylmalonyl units results in formation of two branched methyl groups in the elongated product. This Mycobacterium tuberculosis (strain CDC 1551 / Oshkosh) protein is Phenolphthiocerol/phthiocerol polyketide synthase subunit C (ppsD).